Reading from the N-terminus, the 37-residue chain is Esculentin-2Rb (37 aa).

Cys31 and Cys37 form a disulfide bridge.

As to expression, expressed by the skin glands.

The protein localises to the secreted. Its function is as follows. Antimicrobial peptide. In Pelophylax ridibundus (Marsh frog), this protein is Esculentin-2Rb.